The sequence spans 71 residues: Prokaryotic ubiquitin-like protein Pup (71 aa).

The segment covering 1–18 (MATRDSGGQSQTGRSQQG) has biased composition (low complexity). The interval 1–42 (MATRDSGGQSQTGRSQQGEEIEDVTTEASPEVAERHAEITED) is disordered. The tract at residues 27-65 (EASPEVAERHAEITEDVDDLLDEIDSVLEENAEEFVRGY) is ARC ATPase binding. Residues 31–60 (EVAERHAEITEDVDDLLDEIDSVLEENAEE) are a coiled coil. Glutamate 71 participates in a covalent cross-link: Isoglutamyl lysine isopeptide (Glu-Lys) (interchain with K-? in acceptor proteins).

The protein belongs to the prokaryotic ubiquitin-like protein family. In terms of assembly, strongly interacts with the proteasome-associated ATPase ARC through a hydrophobic interface; the interacting region of Pup lies in its C-terminal half. There is one Pup binding site per ARC hexamer ring.

It participates in protein degradation; proteasomal Pup-dependent pathway. Protein modifier that is covalently attached to lysine residues of substrate proteins, thereby targeting them for proteasomal degradation. The tagging system is termed pupylation. The sequence is that of Prokaryotic ubiquitin-like protein Pup from Salinispora arenicola (strain CNS-205).